A 449-amino-acid chain; its full sequence is Bifunctional F420 biosynthesis protein FbiB (449 aa).

The segment at 1–245 (MSPAGEHGTA…PGTEDLFWLG (245 aa)) is coenzyme F420:L-glutamate ligase. GTP contacts are provided by residues 21 to 24 (LPEF), Ser51, and Lys56. Asp110 contributes to the a divalent metal cation binding site. Asn113 serves as a coordination point for GTP. The a divalent metal cation site is built by Asp151 and Thr152. The segment at 246 to 449 (TAEAIELGRR…ADPGDLLIRK (204 aa)) is dehydro-coenzyme F420-0 reductase. FMN-binding positions include 261-265 (RRSVR) and Ala289. Position 321 (Asp321) interacts with coenzyme F420-(gamma-Glu)n. FMN-binding residues include Gly400 and Arg437.

It in the N-terminal section; belongs to the CofE family. It depends on Mg(2+) as a cofactor. The cofactor is Mn(2+). K(+) is required as a cofactor.

The catalysed reaction is oxidized coenzyme F420-0 + GTP + L-glutamate = oxidized coenzyme F420-1 + GDP + phosphate + H(+). The enzyme catalyses oxidized coenzyme F420-1 + GTP + L-glutamate = oxidized coenzyme F420-2 + GDP + phosphate + H(+). It carries out the reaction oxidized coenzyme F420-(gamma-L-Glu)(n) + GTP + L-glutamate = oxidized coenzyme F420-(gamma-L-Glu)(n+1) + GDP + phosphate + H(+). It catalyses the reaction oxidized coenzyme F420-0 + FMN + H(+) = dehydro coenzyme F420-0 + FMNH2. The protein operates within cofactor biosynthesis; coenzyme F420 biosynthesis. In terms of biological role, bifunctional enzyme that catalyzes the GTP-dependent successive addition of multiple gamma-linked L-glutamates to the L-lactyl phosphodiester of 7,8-didemethyl-8-hydroxy-5-deazariboflavin (F420-0) to form polyglutamated F420 derivatives, and the FMNH2-dependent reduction of dehydro-F420-0 to form F420-0. The chain is Bifunctional F420 biosynthesis protein FbiB from Mycobacterium avium (strain 104).